The following is an 810-amino-acid chain: DNA-binding protein REB1 (810 aa).

2 stretches are compositionally biased toward basic and acidic residues: residues 1–10 (MPSGHNDKNA) and 29–44 (HQNH…LENK). Disordered regions lie at residues 1–80 (MPSG…ENIS), 114–161 (NQQD…GVDD), 180–243 (NNNN…TNND), 294–313 (HGLN…LSNS), and 346–365 (QDTQ…AGSV). Low complexity-rich tracts occupy residues 51-64 (IVES…NNND) and 124-135 (NNNTDNGNDSNN). Over residues 149 to 161 (DKNKKDAGVGVDD) the composition is skewed to basic and acidic residues. The span at 180 to 191 (NNNNNNSIANDS) shows a compositional bias: low complexity. The segment covering 198–208 (HDNGNNHENSQ) has biased composition (basic and acidic residues). Positions 346 to 355 (QDTQPHQQKS) are enriched in polar residues. Position 355 is a phosphoserine (S355). An HTH myb-type domain is found at 470 to 523 (HIFEQRGKWTAEEEQELAKLCAEKEGQWAEIGKTLGRMPEDCRDRWRNYVKCGT). Positions 497-519 (WAEIGKTLGRMPEDCRDRWRNYV) form a DNA-binding region, H-T-H motif. The tract at residues 572–667 (QNDHRNNDED…STHSKSLSNT (96 aa)) is disordered. The segment covering 586–606 (ASAAAAAAAAIQEQQQLLQQK) has biased composition (low complexity). Basic and acidic residues predominate over residues 627-636 (DNKDEDKPHD). Positions 643 to 667 (DDNSQNSMVPAPSATSTHSKSLSNT) are enriched in polar residues. The 26-residue stretch at 692–717 (NWTIVSERMGGTRSRIQCRYKWNKLV) folds into the Myb-like domain. A Glycyl lysine isopeptide (Lys-Gly) (interchain with G-Cter in SUMO) cross-link involves residue K807.

The protein resides in the nucleus. DNA-binding protein that recognizes sites within both the enhancer and the promoter of rRNA transcription, as well as upstream of many genes transcribed by RNA polymerase II. It is essential for cell growth. May stimulate or inhibit transcription. Specifically recognizes the sequence 5'-CCGGGTA-3' or 5'-CGGGTRR-3' (where R is any purine). A member of the general regulatory factors (GRFs) which act as genome partitioners. Acts as a chromatin insulator which are known as STARs (Subtelomeric anti-silencing region). STARs prevent negative or positive transcription influence by extending across chromatin to a promoter. The polypeptide is DNA-binding protein REB1 (REB1) (Saccharomyces cerevisiae (strain ATCC 204508 / S288c) (Baker's yeast)).